We begin with the raw amino-acid sequence, 157 residues long: Endoribonuclease YbeY (157 aa).

Zn(2+)-binding residues include histidine 113, histidine 117, and histidine 123.

Belongs to the endoribonuclease YbeY family. Zn(2+) serves as cofactor.

It is found in the cytoplasm. Functionally, single strand-specific metallo-endoribonuclease involved in late-stage 70S ribosome quality control and in maturation of the 3' terminus of the 16S rRNA. The chain is Endoribonuclease YbeY from Ehrlichia ruminantium (strain Welgevonden).